Here is a 137-residue protein sequence, read N- to C-terminus: Large ribosomal subunit protein uL16 (137 aa).

This sequence belongs to the universal ribosomal protein uL16 family. In terms of assembly, part of the 50S ribosomal subunit.

Functionally, binds 23S rRNA and is also seen to make contacts with the A and possibly P site tRNAs. The polypeptide is Large ribosomal subunit protein uL16 (Psychrobacter arcticus (strain DSM 17307 / VKM B-2377 / 273-4)).